The chain runs to 372 residues: Delta-type opioid receptor (372 aa).

Over methionine 1–alanine 47 the chain is Extracellular. 2 N-linked (GlcNAc...) asparagine glycosylation sites follow: asparagine 18 and asparagine 33. A helical membrane pass occupies residues leucine 48–valine 75. Residues arginine 76–asparagine 85 lie on the Cytoplasmic side of the membrane. The helical transmembrane segment at isoleucine 86–leucine 110 threads the bilayer. Residues methionine 111–lysine 122 are Extracellular-facing. Cysteine 121 and cysteine 198 are disulfide-bonded. The chain crosses the membrane as a helical span at residues alanine 123–valine 144. At aspartate 145–alanine 163 the chain is on the cytoplasmic side. A helical membrane pass occupies residues lysine 164–methionine 186. The Extracellular segment spans residues alanine 187–serine 206. Residues tryptophan 207–leucine 238 form a helical membrane-spanning segment. The Cytoplasmic segment spans residues arginine 239–arginine 261. A helical membrane pass occupies residues methionine 262–tryptophan 284. The Extracellular segment spans residues threonine 285 to alanine 299. A helical membrane pass occupies residues leucine 300–leucine 321. The Cytoplasmic portion of the chain corresponds to aspartate 322–alanine 372. Cysteine 333 is lipidated: S-palmitoyl cysteine. The tract at residues proline 340–alanine 372 is disordered. Over residues arginine 347–valine 357 the composition is skewed to basic and acidic residues.

This sequence belongs to the G-protein coupled receptor 1 family. In terms of assembly, may form homooligomers. Forms a heterodimer with OPRM1. Interacts with GPRASP1. Interacts with RTP4; the interaction promotes cell surface localization of the OPRD1-OPRM1 heterodimer. N-glycosylated. In terms of processing, ubiquitinated. A basal ubiquitination seems not to be related to degradation. Ubiquitination is increased upon formation of OPRM1:OPRD1 oligomers leading to proteasomal degradation; the ubiquitination is diminished by RTP4. Detected in oocytes (at protein level). Detected in brain cortex, hypothalamus, hippocampus and olfactory bulb. Detected in oocytes.

It is found in the cell membrane. Functionally, G-protein coupled receptor that functions as a receptor for endogenous enkephalins and for a subset of other opioids. Ligand binding causes a conformation change that triggers signaling via guanine nucleotide-binding proteins (G proteins) and modulates the activity of down-stream effectors, such as adenylate cyclase. Signaling leads to the inhibition of adenylate cyclase activity. Inhibits neurotransmitter release by reducing calcium ion currents and increasing potassium ion conductance. Plays a role in the perception of pain and in opiate-mediated analgesia. Plays a role in developing analgesic tolerance to morphine. This is Delta-type opioid receptor (OPRD1) from Homo sapiens (Human).